Consider the following 307-residue polypeptide: Glutaminase (307 aa).

Substrate is bound by residues serine 67, asparagine 117, glutamate 161, asparagine 168, tyrosine 192, tyrosine 243, and valine 261.

The protein belongs to the glutaminase family. As to quaternary structure, homotetramer.

It carries out the reaction L-glutamine + H2O = L-glutamate + NH4(+). This is Glutaminase from Streptomyces coelicolor (strain ATCC BAA-471 / A3(2) / M145).